Consider the following 250-residue polypeptide: DNA repair protein RecO (250 aa).

The protein belongs to the RecO family.

Involved in DNA repair and RecF pathway recombination. This chain is DNA repair protein RecO, found in Staphylococcus aureus (strain MW2).